Consider the following 179-residue polypeptide: MNRLKAKYQDEIVKVMMEKFNYTSVMQAPKVDKIVINMGVGDAVTNTKALDMAVEELQLLTGQKPLITKAKKSIAGFKLREGMPIGAKVTLRGERMYEFLDKLINVSLPRVRDFRGVSKKSFDGRGNYTLGVKEQLIFPEIDYDRVSKVRGMDIVIVTTANTDEESRELLTALGMPFQK.

It belongs to the universal ribosomal protein uL5 family. Part of the 50S ribosomal subunit; part of the 5S rRNA/L5/L18/L25 subcomplex. Contacts the 5S rRNA and the P site tRNA. Forms a bridge to the 30S subunit in the 70S ribosome.

This is one of the proteins that bind and probably mediate the attachment of the 5S RNA into the large ribosomal subunit, where it forms part of the central protuberance. In the 70S ribosome it contacts protein S13 of the 30S subunit (bridge B1b), connecting the 2 subunits; this bridge is implicated in subunit movement. Contacts the P site tRNA; the 5S rRNA and some of its associated proteins might help stabilize positioning of ribosome-bound tRNAs. In Exiguobacterium sibiricum (strain DSM 17290 / CCUG 55495 / CIP 109462 / JCM 13490 / 255-15), this protein is Large ribosomal subunit protein uL5.